The primary structure comprises 201 residues: Translation machinery-associated protein 22 (201 aa).

Residues 104–175 enclose the SUI1 domain; that stretch reads VTVKRIERNK…EIKEFIVEKY (72 aa).

Belongs to the DENR family. As to quaternary structure, interacts with the 40S ribosomal subunit.

It localises to the cytoplasm. The sequence is that of Translation machinery-associated protein 22 (TMA22) from Pyricularia oryzae (strain 70-15 / ATCC MYA-4617 / FGSC 8958) (Rice blast fungus).